Here is a 485-residue protein sequence, read N- to C-terminus: Protein nucleotidyltransferase YdiU (485 aa).

Residues glycine 90, glycine 92, arginine 93, lysine 113, aspartate 125, glycine 126, arginine 176, and arginine 183 each coordinate ATP. Aspartate 252 serves as the catalytic Proton acceptor. Residues asparagine 253 and aspartate 262 each coordinate Mg(2+). Aspartate 262 contributes to the ATP binding site.

Belongs to the SELO family. The cofactor is Mg(2+). Mn(2+) serves as cofactor.

The enzyme catalyses L-seryl-[protein] + ATP = 3-O-(5'-adenylyl)-L-seryl-[protein] + diphosphate. The catalysed reaction is L-threonyl-[protein] + ATP = 3-O-(5'-adenylyl)-L-threonyl-[protein] + diphosphate. It catalyses the reaction L-tyrosyl-[protein] + ATP = O-(5'-adenylyl)-L-tyrosyl-[protein] + diphosphate. It carries out the reaction L-histidyl-[protein] + UTP = N(tele)-(5'-uridylyl)-L-histidyl-[protein] + diphosphate. The enzyme catalyses L-seryl-[protein] + UTP = O-(5'-uridylyl)-L-seryl-[protein] + diphosphate. The catalysed reaction is L-tyrosyl-[protein] + UTP = O-(5'-uridylyl)-L-tyrosyl-[protein] + diphosphate. In terms of biological role, nucleotidyltransferase involved in the post-translational modification of proteins. It can catalyze the addition of adenosine monophosphate (AMP) or uridine monophosphate (UMP) to a protein, resulting in modifications known as AMPylation and UMPylation. This chain is Protein nucleotidyltransferase YdiU, found in Aliivibrio fischeri (strain ATCC 700601 / ES114) (Vibrio fischeri).